We begin with the raw amino-acid sequence, 275 residues long: NH(3)-dependent NAD(+) synthetase (275 aa).

ATP is bound at residue 46 to 53 (GISGGQDS). D52 contributes to the Mg(2+) binding site. R140 is a deamido-NAD(+) binding site. An ATP-binding site is contributed by T160. E165 contributes to the Mg(2+) binding site. Deamido-NAD(+) contacts are provided by K173 and D180. Residues K189 and T211 each coordinate ATP. 260–261 (HK) contacts deamido-NAD(+).

It belongs to the NAD synthetase family. As to quaternary structure, homodimer.

It carries out the reaction deamido-NAD(+) + NH4(+) + ATP = AMP + diphosphate + NAD(+) + H(+). The protein operates within cofactor biosynthesis; NAD(+) biosynthesis; NAD(+) from deamido-NAD(+) (ammonia route): step 1/1. In terms of biological role, catalyzes the ATP-dependent amidation of deamido-NAD to form NAD. Uses ammonia as a nitrogen source. The chain is NH(3)-dependent NAD(+) synthetase from Escherichia coli O127:H6 (strain E2348/69 / EPEC).